Reading from the N-terminus, the 403-residue chain is Phosphoglycerate kinase (403 aa).

Residues 24–26 (DLN), Arg39, 62–65 (HLGR), Arg121, and Arg161 contribute to the substrate site. ATP contacts are provided by residues Lys211, Gly299, Glu330, and 359–362 (GGDS).

It belongs to the phosphoglycerate kinase family. Monomer.

It is found in the cytoplasm. The enzyme catalyses (2R)-3-phosphoglycerate + ATP = (2R)-3-phospho-glyceroyl phosphate + ADP. The protein operates within carbohydrate degradation; glycolysis; pyruvate from D-glyceraldehyde 3-phosphate: step 2/5. The sequence is that of Phosphoglycerate kinase from Corynebacterium jeikeium (strain K411).